The sequence spans 480 residues: NADH-quinone oxidoreductase subunit N (480 aa).

A run of 13 helical transmembrane segments spans residues 13–33 (ISPMLILCGVALLSLVVQFLI), 41–61 (PLWVLSILGILVAMYALYHTT), 81–101 (VWLSAIYLIAGLITLLVAPPF), 107–127 (TLFPEFFPLMLFCLSGMMFLT), 132–152 (LIVIFVGLEILSLSLYVMIGM), 167–187 (FLLGTFSSGFMLLGIAFLYGG), 212–232 (LGLGLFFVGVSFKAALVPFHS), 245–265 (ITGFMASAGKASALGLVIILF), 276–296 (VWKYLMGTIALISMTWGNIVA), 314–334 (AGYIVAGIACGAGLEALYYLF), 373–393 (ALALSLVFLSFAGFPPLIGFW), 413–433 (LLFGAVANSCIAFYYYMKITI), and 454–474 (PTLGFLIFLLCVFFTAGWIFF).

The protein belongs to the complex I subunit 2 family. In terms of assembly, NDH-1 is composed of 14 different subunits. Subunits NuoA, H, J, K, L, M, N constitute the membrane sector of the complex.

It localises to the cell inner membrane. The enzyme catalyses a quinone + NADH + 5 H(+)(in) = a quinol + NAD(+) + 4 H(+)(out). In terms of biological role, NDH-1 shuttles electrons from NADH, via FMN and iron-sulfur (Fe-S) centers, to quinones in the respiratory chain. The immediate electron acceptor for the enzyme in this species is believed to be ubiquinone. Couples the redox reaction to proton translocation (for every two electrons transferred, four hydrogen ions are translocated across the cytoplasmic membrane), and thus conserves the redox energy in a proton gradient. The protein is NADH-quinone oxidoreductase subunit N of Leptospira biflexa serovar Patoc (strain Patoc 1 / Ames).